The following is a 201-amino-acid chain: Large ribosomal subunit protein uL4 (201 aa).

Residues 42–67 (GNSAQKTRSEVSGGGKKPWNQKGTGR) form a disordered region.

Belongs to the universal ribosomal protein uL4 family. Part of the 50S ribosomal subunit.

One of the primary rRNA binding proteins, this protein initially binds near the 5'-end of the 23S rRNA. It is important during the early stages of 50S assembly. It makes multiple contacts with different domains of the 23S rRNA in the assembled 50S subunit and ribosome. Functionally, forms part of the polypeptide exit tunnel. The sequence is that of Large ribosomal subunit protein uL4 from Legionella pneumophila (strain Corby).